The primary structure comprises 222 residues: Leucyl/phenylalanyl-tRNA--protein transferase (222 aa).

This sequence belongs to the L/F-transferase family.

It localises to the cytoplasm. The enzyme catalyses N-terminal L-lysyl-[protein] + L-leucyl-tRNA(Leu) = N-terminal L-leucyl-L-lysyl-[protein] + tRNA(Leu) + H(+). The catalysed reaction is N-terminal L-arginyl-[protein] + L-leucyl-tRNA(Leu) = N-terminal L-leucyl-L-arginyl-[protein] + tRNA(Leu) + H(+). It catalyses the reaction L-phenylalanyl-tRNA(Phe) + an N-terminal L-alpha-aminoacyl-[protein] = an N-terminal L-phenylalanyl-L-alpha-aminoacyl-[protein] + tRNA(Phe). In terms of biological role, functions in the N-end rule pathway of protein degradation where it conjugates Leu, Phe and, less efficiently, Met from aminoacyl-tRNAs to the N-termini of proteins containing an N-terminal arginine or lysine. This is Leucyl/phenylalanyl-tRNA--protein transferase from Legionella pneumophila (strain Corby).